The chain runs to 351 residues: Nuclear inhibitor of protein phosphatase 1 (351 aa).

Residues 1 to 142 (MAAAANSGSS…LPSAVKGDEK (142 aa)) are interaction with CDC5L, SF3B1 and MELK. An FHA domain is found at 49-101 (YLFGRNPDLCDFTIDHQSCSRVHAALVYHKHLKRVFLIDLNSTHGTFLGHIRL). The interval 143–224 (MGGEDDELKG…VDPSVGRFRN (82 aa)) is interaction with EED. Thr161 carries the post-translational modification Phosphothreonine. 2 positions are modified to phosphoserine: Ser178 and Ser199. 2 short sequence motifs (nuclear localization signal) span residues 185–209 (GNLDIQRPKRKRKNSRVTFSEDDEI) and 210–240 (INPEDVDPSVGRFRNMVQTAVVPVKKKRVEG). Positions 191–200 (RPKRKRKNSR) are involved in PP-1 inhibition. The tract at residues 200 to 203 (RVTF) is involved in PP-1 binding. Position 204 is a phosphoserine (Ser204). Ser249 bears the Phosphoserine mark. The residue at position 264 (Tyr264) is a Phosphotyrosine; by LYN; in vitro. Positions 310–329 (AVNMNPAPNPAVYNPEAVNE) are interaction with EED. Residues 316 to 351 (APNPAVYNPEAVNEPKKKKYAKEAWPGKKPTPSLLI) are disordered. The tract at residues 330 to 351 (PKKKKYAKEAWPGKKPTPSLLI) is RNA-binding. Positions 331 to 337 (KKKKYAK) are involved in PP-1 inhibition. Tyr335 is modified (phosphotyrosine).

As to quaternary structure, interacts with phosphorylated CDC5L, SF3B1 and MELK. Interacts with EED, in a nucleic acid-stimulated manner. Part of a complex consisting of PPP1R8, EED, HDAC2 and PP-1. Part of the spliceosome. Interacts with PPP1CA, PPP1CB and PPP1CC. It depends on Mg(2+) as a cofactor. May be inactivated by phosphorylation on Ser-199 or Ser-204. Phosphorylated by Lyn in vitro on Tyr-264, and also on Tyr-335 in the presence of RNA. In terms of tissue distribution, ubiquitously expressed, with highest levels in heart and skeletal muscle, followed by brain, placenta, lung, liver and pancreas. Less abundant in kidney. The concentration and ratio between isoforms is cell-type dependent. Isoform Alpha (&gt;90%) and isoform Beta were found in brain, heart and kidney. Isoform Gamma is mainly found in B-cells and T-lymphocytes, and has been found in 293 embryonic kidney cells.

The protein resides in the nucleus. It localises to the nucleus speckle. Its subcellular location is the cytoplasm. Its function is as follows. Inhibitor subunit of the major nuclear protein phosphatase-1 (PP-1). It has RNA-binding activity but does not cleave RNA and may target PP-1 to RNA-associated substrates. May also be involved in pre-mRNA splicing. Binds DNA and might act as a transcriptional repressor. Seems to be required for cell proliferation. In terms of biological role, isoform Gamma is a site-specific single-strand endoribonuclease that cleaves single strand RNA 3' to purines and pyrimidines in A+U-rich regions. It generates 5'-phosphate termini at the site of cleavage. This isoform does not inhibit PP-1. May be implicated in mRNA splicing. The sequence is that of Nuclear inhibitor of protein phosphatase 1 (PPP1R8) from Homo sapiens (Human).